Consider the following 493-residue polypeptide: Transcript termination protein A18 (493 aa).

Positions 100 to 256 (MIESKRPLYI…NSIINIAKLS (157 aa)) constitute a Helicase ATP-binding domain. Position 113–120 (113–120 (LACGFGKT)) interacts with ATP. Positions 206–209 (DESH) match the DESH box motif.

Belongs to the helicase family. Poxviruses subfamily. As to quaternary structure, interacts with G2. Might be part of a transcription complex composed at least of G2, A18, and H5.

It localises to the virion. Its function is as follows. DNA helicase which seems to act as a postreplicative transcription termination factor. Involved in ATP-dependent release of nascent RNA. Forms a stable complex with single-stranded DNA, and to a lesser extent RNA. This Homo sapiens (Human) protein is Transcript termination protein A18.